Reading from the N-terminus, the 144-residue chain is UPF0735 ACT domain-containing protein LSEI_1046 (144 aa).

An ACT domain is found at 68-143 (VISLMLHHDR…GVSDVHLVSV (76 aa)).

Belongs to the UPF0735 family.

The sequence is that of UPF0735 ACT domain-containing protein LSEI_1046 from Lacticaseibacillus paracasei (strain ATCC 334 / BCRC 17002 / CCUG 31169 / CIP 107868 / KCTC 3260 / NRRL B-441) (Lactobacillus paracasei).